Here is a 334-residue protein sequence, read N- to C-terminus: Nucleoid-associated protein PFL_1060 (334 aa).

Belongs to the YejK family.

It localises to the cytoplasm. The protein resides in the nucleoid. The sequence is that of Nucleoid-associated protein PFL_1060 from Pseudomonas fluorescens (strain ATCC BAA-477 / NRRL B-23932 / Pf-5).